The sequence spans 193 residues: dTTP/UTP pyrophosphatase (193 aa).

The active-site Proton acceptor is aspartate 68.

Belongs to the Maf family. YhdE subfamily. A divalent metal cation is required as a cofactor.

Its subcellular location is the cytoplasm. The enzyme catalyses dTTP + H2O = dTMP + diphosphate + H(+). It catalyses the reaction UTP + H2O = UMP + diphosphate + H(+). Nucleoside triphosphate pyrophosphatase that hydrolyzes dTTP and UTP. May have a dual role in cell division arrest and in preventing the incorporation of modified nucleotides into cellular nucleic acids. The chain is dTTP/UTP pyrophosphatase from Ruegeria sp. (strain TM1040) (Silicibacter sp.).